The chain runs to 450 residues: Tubulin alpha-4 chain (450 aa).

GTP is bound at residue Q11. K40 carries the post-translational modification N6-acetyllysine. GTP contacts are provided by E71, G144, T145, T179, N206, and N228. E71 is a Mg(2+) binding site. E254 is a catalytic residue. A disordered region spans residues 431–450; it reads DYEEVGAESGEGDEGDEEEY.

It belongs to the tubulin family. Dimer of alpha and beta chains. A typical microtubule is a hollow water-filled tube with an outer diameter of 25 nm and an inner diameter of 15 nM. Alpha-beta heterodimers associate head-to-tail to form protofilaments running lengthwise along the microtubule wall with the beta-tubulin subunit facing the microtubule plus end conferring a structural polarity. Microtubules usually have 13 protofilaments but different protofilament numbers can be found in some organisms and specialized cells. Mg(2+) serves as cofactor. In terms of processing, undergoes a tyrosination/detyrosination cycle, the cyclic removal and re-addition of a C-terminal tyrosine residue by the enzymes tubulin tyrosine carboxypeptidase (TTCP) and tubulin tyrosine ligase (TTL), respectively. Post-translationally, acetylation of alpha chains at Lys-40 stabilizes microtubules and affects affinity and processivity of microtubule motors. This modification has a role in multiple cellular functions, ranging from cell motility, cell cycle progression or cell differentiation to intracellular trafficking and signaling.

Its subcellular location is the cytoplasm. It is found in the cytoskeleton. The catalysed reaction is GTP + H2O = GDP + phosphate + H(+). Functionally, tubulin is the major constituent of microtubules, a cylinder consisting of laterally associated linear protofilaments composed of alpha- and beta-tubulin heterodimers. Microtubules grow by the addition of GTP-tubulin dimers to the microtubule end, where a stabilizing cap forms. Below the cap, tubulin dimers are in GDP-bound state, owing to GTPase activity of alpha-tubulin. This Gossypium hirsutum (Upland cotton) protein is Tubulin alpha-4 chain.